The primary structure comprises 418 residues: Gamma-glutamyl phosphate reductase (418 aa).

Belongs to the gamma-glutamyl phosphate reductase family.

It localises to the cytoplasm. It catalyses the reaction L-glutamate 5-semialdehyde + phosphate + NADP(+) = L-glutamyl 5-phosphate + NADPH + H(+). Its pathway is amino-acid biosynthesis; L-proline biosynthesis; L-glutamate 5-semialdehyde from L-glutamate: step 2/2. Functionally, catalyzes the NADPH-dependent reduction of L-glutamate 5-phosphate into L-glutamate 5-semialdehyde and phosphate. The product spontaneously undergoes cyclization to form 1-pyrroline-5-carboxylate. This is Gamma-glutamyl phosphate reductase from Desulfotalea psychrophila (strain LSv54 / DSM 12343).